Consider the following 99-residue polypeptide: Small ribosomal subunit protein uS14c (99 aa).

The segment at 46–66 (LQSSPRNSAPTRLHRRCSSTG) is disordered.

It belongs to the universal ribosomal protein uS14 family. In terms of assembly, part of the 30S ribosomal subunit.

Its subcellular location is the plastid. It is found in the chloroplast. Functionally, binds 16S rRNA, required for the assembly of 30S particles. The chain is Small ribosomal subunit protein uS14c from Pinus thunbergii (Japanese black pine).